The chain runs to 367 residues: Chorismate synthase (367 aa).

Position 48 (Arg-48) interacts with NADP(+). FMN-binding positions include 125 to 127, 243 to 244, Gly-283, 298 to 302, and Arg-324; these read RSS, NA, and KPTSS.

It belongs to the chorismate synthase family. Homotetramer. The cofactor is FMNH2.

It catalyses the reaction 5-O-(1-carboxyvinyl)-3-phosphoshikimate = chorismate + phosphate. The protein operates within metabolic intermediate biosynthesis; chorismate biosynthesis; chorismate from D-erythrose 4-phosphate and phosphoenolpyruvate: step 7/7. Catalyzes the anti-1,4-elimination of the C-3 phosphate and the C-6 proR hydrogen from 5-enolpyruvylshikimate-3-phosphate (EPSP) to yield chorismate, which is the branch point compound that serves as the starting substrate for the three terminal pathways of aromatic amino acid biosynthesis. This reaction introduces a second double bond into the aromatic ring system. This chain is Chorismate synthase, found in Psychrobacter sp. (strain PRwf-1).